Reading from the N-terminus, the 260-residue chain is uncharacterized protein (260 aa).

Residues 1–22 (MGYSKRFALYISILILIVMVAG) form the signal peptide. Residue Cys23 is the site of N-palmitoyl cysteine attachment. A lipid anchor (S-diacylglycerol cysteine) is attached at Cys23.

It belongs to the staphylococcal tandem lipoprotein family.

It is found in the cell membrane. This is an uncharacterized protein from Staphylococcus aureus (strain N315).